The chain runs to 395 residues: GA-binding protein subunit beta-1 (395 aa).

Ser2 carries the post-translational modification N-acetylserine. ANK repeat units lie at residues Asp5 to Thr34 and Leu37 to Ala66. Lys69 is modified (N6-acetyllysine). ANK repeat units lie at residues Val70–Ala99, Leu103–Thr132, and Phe136–Thr166. A transcription activation and HCFC1 interaction region spans residues Asp258–Ala327. N6-acetyllysine is present on residues Lys352 and Lys381.

As to quaternary structure, heterotetramer of two alpha and two beta subunits. Interacts with HCFC1, causing repression of transcriptional activity. Post-translationally, acetylated by EP300/p300. Deacetylated by SIRT7, promoting heterotetramerization and activity.

Its subcellular location is the nucleus. Functionally, transcription factor capable of interacting with purine rich repeats (GA repeats). Acts as a master regulator of nuclear-encoded mitochondrial genes. In terms of biological role, (Microbial infection) Necessary for the expression of the Adenovirus E4 gene. This is GA-binding protein subunit beta-1 (GABPB1) from Homo sapiens (Human).